Reading from the N-terminus, the 55-residue chain is Large ribosomal subunit protein bL32c (55 aa).

Residues 1 to 24 (MAVPKKRTSKSKKNARKANWKRKG) are disordered.

It belongs to the bacterial ribosomal protein bL32 family.

The protein resides in the plastid. It localises to the chloroplast. The polypeptide is Large ribosomal subunit protein bL32c (Phaeodactylum tricornutum (strain CCAP 1055/1)).